Here is a 1203-residue protein sequence, read N- to C-terminus: Cingulin (1203 aa).

The segment at 7–357 (MAEPRGPVDH…VMVSSGSTKA (351 aa)) is head. A disordered region spans residues 25–48 (EPVSGAEMGTLRRGGRRPAKDARA). The ZIM signature appears at 48–62 (ASTYGVAVRVQGIAG). The interval 54-67 (AVRVQGIAGQPFVV) is interaction with TJP1/ZO1. The segment at 89–127 (GASGALSSDLELPENPYSQVKGFPAPSQSSTSDEEPGAY) is disordered. A phosphoserine mark is found at Ser-95, Ser-96, Ser-135, Ser-137, Ser-140, Ser-155, Ser-165, Ser-214, Ser-217, Ser-258, Ser-276, Ser-338, and Ser-351. Residues 186–266 (DSQLGGQARG…LSPLSGFSRS (81 aa)) form a disordered region. Over residues 207–231 (EQRKRSKSLDSRLPRDTFEERERQS) the composition is skewed to basic and acidic residues. Positions 232-266 (TNHWTSSTKYDNHVGTSKQPAQSQNLSPLSGFSRS) are enriched in polar residues. The stretch at 358–1160 (VAGQGELTRK…SLEKDSWRKA (803 aa)) forms a coiled coil. Lys-579 is modified (N6-acetyllysine). Position 712 is a phosphothreonine (Thr-712). Disordered regions lie at residues 1034-1053 (LASS…LESQ) and 1154-1181 (KDSW…EEFD). Positions 1044–1053 (SASLSQLESQ) are enriched in low complexity. Residues 1161–1203 (SRSAAESALKNEGLSSDEEFDSVYDPSSIASLLTESNLQTSSC) form a tail region. Ser-1175, Ser-1176, and Ser-1182 each carry phosphoserine.

Belongs to the cingulin family. Homodimer. Interacts with TJP1/ZO1. Interacts with SPEF1. In terms of tissue distribution, localized on the cytoplasmic face of tight junctions of polarized epithelia and some endothelia. Expressed in pancreas, kidney, liver and lung, but not in skeletal muscle, placenta, brain or heart.

Its subcellular location is the cell junction. The protein resides in the tight junction. In terms of biological role, probably plays a role in the formation and regulation of the tight junction (TJ) paracellular permeability barrier. In Homo sapiens (Human), this protein is Cingulin.